Consider the following 229-residue polypeptide: MEGSHFAIKDWSEDDKPREKLMLKGKEALSDAELMAILIGSGSRNESAVALSQRILASAKNLNSLWKMSVSQLIKFKGIGEAKAVSIVAALELGRRQRAEDILKLKKITSSKDAFTIMQPIIGELPHEEFWVLFLNNSNKVISKAQLSKGGIAGTIVDVRLVFKLGLENGATGLILCHNHPSGELNPSQADKQITKKIKTAGEILDVKILDHLIITETKYYSFVDEGIF.

Positions 107 to 229 (KITSSKDAFT…YYSFVDEGIF (123 aa)) constitute an MPN domain. Histidine 178, histidine 180, and aspartate 191 together coordinate Zn(2+). Positions 178 to 191 (HNHPSGELNPSQAD) match the JAMM motif motif.

Belongs to the UPF0758 family.

This Flavobacterium johnsoniae (strain ATCC 17061 / DSM 2064 / JCM 8514 / BCRC 14874 / CCUG 350202 / NBRC 14942 / NCIMB 11054 / UW101) (Cytophaga johnsonae) protein is UPF0758 protein Fjoh_0413.